Consider the following 83-residue polypeptide: Apolipoprotein C-I, basic form (83 aa).

The N-terminal stretch at 1 to 26 (MRLFLSLPVLVVVLSIVLEGPAPAQG) is a signal peptide.

The protein belongs to the apolipoprotein C1 family.

It localises to the secreted. Functionally, inhibitor of lipoprotein binding to the low density lipoprotein (LDL) receptor, LDL receptor-related protein, and very low density lipoprotein (VLDL) receptor. Associates with high density lipoproteins (HDL) and the triacylglycerol-rich lipoproteins in the plasma and makes up about 10% of the protein of the VLDL and 2% of that of HDL. Appears to interfere directly with fatty acid uptake and is also the major plasma inhibitor of cholesteryl ester transfer protein (CETP). Binds free fatty acids and reduces their intracellular esterification. Modulates the interaction of APOE with beta-migrating VLDL and inhibits binding of beta-VLDL to the LDL receptor-related protein. The sequence is that of Apolipoprotein C-I, basic form (APOC1B) from Pan troglodytes (Chimpanzee).